Consider the following 512-residue polypeptide: Norfluorocurarine oxidase (512 aa).

The chain crosses the membrane as a helical span at residues 3–23 (LLLNPSLFSLLPLLLFIIFLF). Cys-453 contacts heme.

It belongs to the cytochrome P450 family. Requires heme as cofactor.

The protein resides in the membrane. It catalyses the reaction norfluorocurarine + reduced [NADPH--hemoprotein reductase] + O2 = 18-hydroxynorfluorocurarine + oxidized [NADPH--hemoprotein reductase] + H2O + H(+). Its pathway is alkaloid biosynthesis. In terms of biological role, monooxygenase involved in the biosynthesis of curare monoterpene indole alkaloids (MIAs), natural products such as diaboline, a pharmacologically active compound used to regulate blood pressure. Curare alkaloids act as animal glycine receptor antagonists. Catalyzes the conversion of norfluorocurarine to 18-OH norfluorocurarine. The sequence is that of Norfluorocurarine oxidase from Strychnos sp.